Consider the following 217-residue polypeptide: Elongation factor Ts (217 aa).

Residues 82-85 (TDFV) form an involved in Mg(2+) ion dislocation from EF-Tu region.

Belongs to the EF-Ts family.

It is found in the cytoplasm. Functionally, associates with the EF-Tu.GDP complex and induces the exchange of GDP to GTP. It remains bound to the aminoacyl-tRNA.EF-Tu.GTP complex up to the GTP hydrolysis stage on the ribosome. This chain is Elongation factor Ts, found in Desulfitobacterium hafniense (strain DSM 10664 / DCB-2).